A 481-amino-acid polypeptide reads, in one-letter code: Glutamyl-tRNA(Gln) amidotransferase subunit A (481 aa).

Catalysis depends on charge relay system residues Lys76 and Ser151. Ser175 acts as the Acyl-ester intermediate in catalysis.

Belongs to the amidase family. GatA subfamily. In terms of assembly, heterotrimer of A, B and C subunits.

The catalysed reaction is L-glutamyl-tRNA(Gln) + L-glutamine + ATP + H2O = L-glutaminyl-tRNA(Gln) + L-glutamate + ADP + phosphate + H(+). Its function is as follows. Allows the formation of correctly charged Gln-tRNA(Gln) through the transamidation of misacylated Glu-tRNA(Gln) in organisms which lack glutaminyl-tRNA synthetase. The reaction takes place in the presence of glutamine and ATP through an activated gamma-phospho-Glu-tRNA(Gln). The chain is Glutamyl-tRNA(Gln) amidotransferase subunit A from Neisseria meningitidis serogroup C / serotype 2a (strain ATCC 700532 / DSM 15464 / FAM18).